A 274-amino-acid polypeptide reads, in one-letter code: Bis(5'-nucleosyl)-tetraphosphatase, symmetrical (274 aa).

This sequence belongs to the Ap4A hydrolase family.

It catalyses the reaction P(1),P(4)-bis(5'-adenosyl) tetraphosphate + H2O = 2 ADP + 2 H(+). Its function is as follows. Hydrolyzes diadenosine 5',5'''-P1,P4-tetraphosphate to yield ADP. The polypeptide is Bis(5'-nucleosyl)-tetraphosphatase, symmetrical (Shewanella sediminis (strain HAW-EB3)).